A 521-amino-acid polypeptide reads, in one-letter code: U4/U6 small nuclear ribonucleoprotein Prp4 (521 aa).

Lys-26 is subject to N6-acetyllysine. 7 WD repeats span residues 229–268, 271–318, 321–360, 363–402, 405–444, 447–487, and 490–521; these read DDRP…LHTL, HNTN…VADI, HTVR…ILHQ, HSMG…IMFL, HLKE…VYTI, HQNL…LKTL, and HEGK…WMAE.

In terms of assembly, component of the precatalytic spliceosome (spliceosome B complex). Component of the U4/U6-U5 tri-snRNP complex, a building block of the precatalytic spliceosome (spliceosome B complex). The U4/U6-U5 tri-snRNP complex is composed of the U4, U6 and U5 snRNAs and at least PRPF3, PRPF4, PRPF6, PRPF8, PRPF31, SNRNP200, TXNL4A, SNRNP40, SNRPB, SNRPD1, SNRPD2, SNRPD3, SNRPE, SNRPF, SNRPG, DDX23, CD2BP2, PPIH, SNU13, EFTUD2, SART1 and USP39, plus LSM2, LSM3, LSM4, LSM5, LSM6, LSM7 and LSM8. Interacts directly with PRPF18, PPIH and PRPF3. Part of a heteromeric complex containing PPIH, PRPF3 and PRPF4 that is stable in the absence of RNA. Interacts with ERCC6.

Its subcellular location is the nucleus. The protein resides in the nucleus speckle. In terms of biological role, plays a role in pre-mRNA splicing as component of the U4/U6-U5 tri-snRNP complex that is involved in spliceosome assembly, and as component of the precatalytic spliceosome (spliceosome B complex). In Bos taurus (Bovine), this protein is U4/U6 small nuclear ribonucleoprotein Prp4 (PRPF4).